The chain runs to 108 residues: Phosphoribosyl-ATP pyrophosphatase (108 aa).

This sequence belongs to the PRA-PH family.

Its subcellular location is the cytoplasm. It catalyses the reaction 1-(5-phospho-beta-D-ribosyl)-ATP + H2O = 1-(5-phospho-beta-D-ribosyl)-5'-AMP + diphosphate + H(+). Its pathway is amino-acid biosynthesis; L-histidine biosynthesis; L-histidine from 5-phospho-alpha-D-ribose 1-diphosphate: step 2/9. The chain is Phosphoribosyl-ATP pyrophosphatase from Pelobacter propionicus (strain DSM 2379 / NBRC 103807 / OttBd1).